Reading from the N-terminus, the 326-residue chain is D-alanine--D-alanine ligase (326 aa).

Positions 121 to 320 (ISVLRPYGIK…LKDLFGSTIE (200 aa)) constitute an ATP-grasp domain. 149–204 (VDKVGLPCFVKANRAGSSFGVTKVKTEDEIISAAKTAFTEDDEAIIESFLDGTEVS) is an ATP binding site. Mg(2+) is bound by residues Glu-275, Glu-287, and Asn-289.

This sequence belongs to the D-alanine--D-alanine ligase family. The cofactor is Mg(2+). Requires Mn(2+) as cofactor.

It is found in the cytoplasm. The enzyme catalyses 2 D-alanine + ATP = D-alanyl-D-alanine + ADP + phosphate + H(+). Its pathway is cell wall biogenesis; peptidoglycan biosynthesis. Its function is as follows. Cell wall formation. The sequence is that of D-alanine--D-alanine ligase from Christiangramia forsetii (strain DSM 17595 / CGMCC 1.15422 / KT0803) (Gramella forsetii).